A 469-amino-acid polypeptide reads, in one-letter code: 3-isopropylmalate dehydratase large subunit (469 aa).

Positions 350, 410, and 413 each coordinate [4Fe-4S] cluster.

Belongs to the aconitase/IPM isomerase family. LeuC type 1 subfamily. As to quaternary structure, heterodimer of LeuC and LeuD. The cofactor is [4Fe-4S] cluster.

It catalyses the reaction (2R,3S)-3-isopropylmalate = (2S)-2-isopropylmalate. The protein operates within amino-acid biosynthesis; L-leucine biosynthesis; L-leucine from 3-methyl-2-oxobutanoate: step 2/4. Its function is as follows. Catalyzes the isomerization between 2-isopropylmalate and 3-isopropylmalate, via the formation of 2-isopropylmaleate. In Rhizobium leguminosarum bv. trifolii (strain WSM2304), this protein is 3-isopropylmalate dehydratase large subunit.